A 585-amino-acid chain; its full sequence is Probable phosphoglucomutase, cytoplasmic 2 (585 aa).

A disordered region spans residues 1–20 (MVSFKVSLVSTSPIDGQKPG). Residues arginine 25 and serine 124 each coordinate alpha-D-glucose 1,6-bisphosphate. Serine 124 serves as the catalytic Phosphoserine intermediate. Residues serine 124, aspartate 301, aspartate 303, and aspartate 305 each coordinate Mg(2+). Serine 124 is modified (phosphoserine). 6 residues coordinate alpha-D-glucose 1,6-bisphosphate: aspartate 305, arginine 306, threonine 369, glutamate 388, serine 390, and lysine 401.

It belongs to the phosphohexose mutase family. In terms of assembly, monomer. The cofactor is Mg(2+).

It localises to the cytoplasm. The catalysed reaction is alpha-D-glucose 1-phosphate = alpha-D-glucose 6-phosphate. It carries out the reaction O-phospho-L-seryl-[protein] + alpha-D-glucose 1-phosphate = alpha-D-glucose 1,6-bisphosphate + L-seryl-[protein]. It catalyses the reaction alpha-D-glucose 1,6-bisphosphate + L-seryl-[protein] = O-phospho-L-seryl-[protein] + alpha-D-glucose 6-phosphate. In terms of biological role, catalyzes the reversible isomerization of alpha-D-glucose 1-phosphate to alpha-D-glucose 6-phosphate. The mechanism proceeds via the intermediate compound alpha-D-glucose 1,6-bisphosphate. This enzyme participates in both the breakdown and synthesis of glucose. This chain is Probable phosphoglucomutase, cytoplasmic 2, found in Arabidopsis thaliana (Mouse-ear cress).